The chain runs to 53 residues: uncharacterized protein (53 aa).

Over residues 14-33 (SPSSLNNNNNINSKSLQINS) the composition is skewed to low complexity. A disordered region spans residues 14–53 (SPSSLNNNNNINSKSLQINSENKSKIQNNNPLGNKGGVQF).

This is an uncharacterized protein from Dictyostelium discoideum (Social amoeba).